The following is a 229-amino-acid chain: Prolactin (229 aa).

The signal sequence occupies residues 1–30; sequence MDSKVSSQKGSRLLLLLVVSNLLLCQGVVS. A disulfide bridge connects residues Cys34 and Cys41. Phosphoserine is present on residues Ser56, Ser64, and Ser120. Cystine bridges form between Cys88-Cys204 and Cys221-Cys229.

This sequence belongs to the somatotropin/prolactin family. In terms of assembly, interacts with PRLR.

The protein resides in the secreted. Its function is as follows. Prolactin acts primarily on the mammary gland by promoting lactation. This chain is Prolactin (PRL), found in Cervus elaphus (Red deer).